The primary structure comprises 396 residues: Elongation factor Tu (396 aa).

In terms of domain architecture, tr-type G spans 10 to 205; that stretch reads KPHVNIGTIG…AVDESIPDPV (196 aa). A G1 region spans residues 19–26; the sequence is GHVDHGKT. Position 19 to 26 (19 to 26) interacts with GTP; it reads GHVDHGKT. T26 contacts Mg(2+). The G2 stretch occupies residues 62-66; it reads GITIN. A G3 region spans residues 83–86; the sequence is DAPG. GTP contacts are provided by residues 83–87 and 138–141; these read DAPGH and NKAD. Residues 138-141 form a G4 region; it reads NKAD. The tract at residues 175–177 is G5; sequence SAL.

This sequence belongs to the TRAFAC class translation factor GTPase superfamily. Classic translation factor GTPase family. EF-Tu/EF-1A subfamily. As to quaternary structure, monomer.

The protein localises to the cytoplasm. It catalyses the reaction GTP + H2O = GDP + phosphate + H(+). Functionally, GTP hydrolase that promotes the GTP-dependent binding of aminoacyl-tRNA to the A-site of ribosomes during protein biosynthesis. This Mycolicibacterium gilvum (strain PYR-GCK) (Mycobacterium gilvum (strain PYR-GCK)) protein is Elongation factor Tu.